The sequence spans 380 residues: Succinyl-diaminopimelate desuccinylase (380 aa).

Histidine 71 is a Zn(2+) binding site. Aspartate 73 is an active-site residue. Aspartate 104 serves as a coordination point for Zn(2+). Glutamate 136 functions as the Proton acceptor in the catalytic mechanism. Glutamate 137, glutamate 166, and histidine 351 together coordinate Zn(2+).

It belongs to the peptidase M20A family. DapE subfamily. As to quaternary structure, homodimer. Zn(2+) is required as a cofactor. Co(2+) serves as cofactor.

It catalyses the reaction N-succinyl-(2S,6S)-2,6-diaminopimelate + H2O = (2S,6S)-2,6-diaminopimelate + succinate. It participates in amino-acid biosynthesis; L-lysine biosynthesis via DAP pathway; LL-2,6-diaminopimelate from (S)-tetrahydrodipicolinate (succinylase route): step 3/3. Functionally, catalyzes the hydrolysis of N-succinyl-L,L-diaminopimelic acid (SDAP), forming succinate and LL-2,6-diaminopimelate (DAP), an intermediate involved in the bacterial biosynthesis of lysine and meso-diaminopimelic acid, an essential component of bacterial cell walls. This Ehrlichia canis (strain Jake) protein is Succinyl-diaminopimelate desuccinylase.